The chain runs to 567 residues: Eukaryotic translation initiation factor 3 subunit D (567 aa).

Disordered regions lie at residues Pro-12–Phe-34 and Gly-122–Arg-160. Residues Gly-128 to Ala-142 are compositionally biased toward gly residues. The RNA gate stretch occupies residues Pro-300–Pro-314.

The protein belongs to the eIF-3 subunit D family. Component of the eukaryotic translation initiation factor 3 (eIF-3) complex. The eIF-3 complex appears to include tif32/eif3a, SPAC25G10.08/eif3b, tif33/eif3c, SPBC4C3.07/eif3f, tif35/eif3g and sum1/eif3i. This set of common subunits may also associate exclusively with either moe1/eif3d and int6/eif3e, or with SPAC821.05/eif3h and SPAC1751.03/eif3m. The eIF-3 complex may also include SPAC3A12.13c/eif3j.

The protein resides in the cytoplasm. MRNA cap-binding component of the eukaryotic translation initiation factor 3 (eIF-3) complex, which is involved in protein synthesis of a specialized repertoire of mRNAs and, together with other initiation factors, stimulates binding of mRNA and methionyl-tRNAi to the 40S ribosome. The eIF-3 complex specifically targets and initiates translation of a subset of mRNAs involved in cell proliferation. In the eIF-3 complex, eif3d specifically recognizes and binds the 7-methylguanosine cap of a subset of mRNAs. In Schizosaccharomyces pombe (strain 972 / ATCC 24843) (Fission yeast), this protein is Eukaryotic translation initiation factor 3 subunit D (moe1).